The chain runs to 208 residues: LexA repressor (208 aa).

Residues 29 to 49 (IREIGDSLNINSTSTVHNNIL) constitute a DNA-binding region (H-T-H motif). Active-site for autocatalytic cleavage activity residues include Ser131 and Lys168.

The protein belongs to the peptidase S24 family. As to quaternary structure, homodimer.

It carries out the reaction Hydrolysis of Ala-|-Gly bond in repressor LexA.. Represses a number of genes involved in the response to DNA damage (SOS response), including recA and lexA. In the presence of single-stranded DNA, RecA interacts with LexA causing an autocatalytic cleavage which disrupts the DNA-binding part of LexA, leading to derepression of the SOS regulon and eventually DNA repair. The chain is LexA repressor from Finegoldia magna (strain ATCC 29328 / DSM 20472 / WAL 2508) (Peptostreptococcus magnus).